The chain runs to 132 residues: Small ribosomal subunit protein uS8 (132 aa).

This sequence belongs to the universal ribosomal protein uS8 family. As to quaternary structure, part of the 30S ribosomal subunit. Contacts proteins S5 and S12.

One of the primary rRNA binding proteins, it binds directly to 16S rRNA central domain where it helps coordinate assembly of the platform of the 30S subunit. This Xanthomonas oryzae pv. oryzae (strain MAFF 311018) protein is Small ribosomal subunit protein uS8.